Here is a 1124-residue protein sequence, read N- to C-terminus: Tyrosine-protein kinase JAK3 (1124 aa).

Positions 1-223 are interaction with cytokine/interferon/growth hormone receptors; the sequence is MAPPSEETPL…RRTVRRALRR (223 aa). Serine 17 is subject to Phosphoserine. The region spanning 24–356 is the FERM domain; the sequence is GALHVLLPAR…GYFRLTTDSQ (333 aa). In terms of domain architecture, SH2; atypical spans 375-475; that stretch reads QCHGPITLDF…GVAVTLTSCC (101 aa). The Protein kinase 1 domain occupies 521-781; sequence LEWHENLGHG…AVIRDLNSLI (261 aa). Tyrosine 785 is modified (phosphotyrosine; by autocatalysis). The region spanning 822–1111 is the Protein kinase 2 domain; sequence LKYISQLGKG…SRGCETHAFT (290 aa). Residues 828–836 and lysine 855 each bind ATP; that span reads LGKGNFGSV. Tyrosine 904 and tyrosine 939 each carry phosphotyrosine. The Proton acceptor role is filled by aspartate 949. Phosphotyrosine; by autocatalysis occurs at positions 980 and 981.

This sequence belongs to the protein kinase superfamily. Tyr protein kinase family. JAK subfamily. In terms of assembly, interacts with STAM2 and MYO18A. Interacts with SHB. Interacts with CD69. Post-translationally, tyrosine phosphorylated in response to IL-2 and IL-4. Dephosphorylation of Tyr-980 and Tyr-981 by PTPN2 negatively regulates cytokine-mediated signaling. In NK cells and an NK-like cell line but not in resting T-cells or in other tissues. The S-form is more commonly seen in hematopoietic lines, whereas the B-form is detected in cells both of hematopoietic and epithelial origins.

It localises to the endomembrane system. The protein localises to the cytoplasm. The enzyme catalyses L-tyrosyl-[protein] + ATP = O-phospho-L-tyrosyl-[protein] + ADP + H(+). Non-receptor tyrosine kinase involved in various processes such as cell growth, development, or differentiation. Mediates essential signaling events in both innate and adaptive immunity and plays a crucial role in hematopoiesis during T-cells development. In the cytoplasm, plays a pivotal role in signal transduction via its association with type I receptors sharing the common subunit gamma such as IL2R, IL4R, IL7R, IL9R, IL15R and IL21R. Following ligand binding to cell surface receptors, phosphorylates specific tyrosine residues on the cytoplasmic tails of the receptor, creating docking sites for STATs proteins. Subsequently, phosphorylates the STATs proteins once they are recruited to the receptor. Phosphorylated STATs then form homodimer or heterodimers and translocate to the nucleus to activate gene transcription. For example, upon IL2R activation by IL2, JAK1 and JAK3 molecules bind to IL2R beta (IL2RB) and gamma chain (IL2RG) subunits inducing the tyrosine phosphorylation of both receptor subunits on their cytoplasmic domain. Then, STAT5A and STAT5B are recruited, phosphorylated and activated by JAK1 and JAK3. Once activated, dimerized STAT5 translocates to the nucleus and promotes the transcription of specific target genes in a cytokine-specific fashion. The chain is Tyrosine-protein kinase JAK3 from Homo sapiens (Human).